Here is a 358-residue protein sequence, read N- to C-terminus: 4-hydroxy-3-methylbut-2-en-1-yl diphosphate synthase (flavodoxin) (358 aa).

The [4Fe-4S] cluster site is built by Cys-270, Cys-273, Cys-305, and Glu-312.

The protein belongs to the IspG family. [4Fe-4S] cluster is required as a cofactor.

The catalysed reaction is (2E)-4-hydroxy-3-methylbut-2-enyl diphosphate + oxidized [flavodoxin] + H2O + 2 H(+) = 2-C-methyl-D-erythritol 2,4-cyclic diphosphate + reduced [flavodoxin]. It functions in the pathway isoprenoid biosynthesis; isopentenyl diphosphate biosynthesis via DXP pathway; isopentenyl diphosphate from 1-deoxy-D-xylulose 5-phosphate: step 5/6. Functionally, converts 2C-methyl-D-erythritol 2,4-cyclodiphosphate (ME-2,4cPP) into 1-hydroxy-2-methyl-2-(E)-butenyl 4-diphosphate. This is 4-hydroxy-3-methylbut-2-en-1-yl diphosphate synthase (flavodoxin) from Ruthia magnifica subsp. Calyptogena magnifica.